We begin with the raw amino-acid sequence, 815 residues long: Phenylalanine--tRNA ligase beta subunit (815 aa).

Residues 39 to 148 form the tRNA-binding domain; sequence SKELQKFEVA…KDAVVGDNFT (110 aa). The 76-residue stretch at 421–496 folds into the B5 domain; the sequence is PQKKPLDFSV…RIYGYDKIES (76 aa). Mg(2+)-binding residues include Asp474, Asp480, Glu483, and Glu484. Residues 721–814 enclose the FDX-ACB domain; the sequence is SDYQANFRDY…ISQKFQGILR (94 aa).

It belongs to the phenylalanyl-tRNA synthetase beta subunit family. Type 1 subfamily. As to quaternary structure, tetramer of two alpha and two beta subunits. Requires Mg(2+) as cofactor.

The protein resides in the cytoplasm. The enzyme catalyses tRNA(Phe) + L-phenylalanine + ATP = L-phenylalanyl-tRNA(Phe) + AMP + diphosphate + H(+). This Rickettsia prowazekii (strain Madrid E) protein is Phenylalanine--tRNA ligase beta subunit (pheT).